Here is a 311-residue protein sequence, read N- to C-terminus: Large ribosomal subunit protein uL18 (311 aa).

Belongs to the universal ribosomal protein uL18 family. As to quaternary structure, component of the large ribosomal subunit (LSU).

It is found in the cytoplasm. Its subcellular location is the nucleus. Functionally, component of the ribosome, a large ribonucleoprotein complex responsible for the synthesis of proteins in the cell. The small ribosomal subunit (SSU) binds messenger RNAs (mRNAs) and translates the encoded message by selecting cognate aminoacyl-transfer RNA (tRNA) molecules. The large subunit (LSU) contains the ribosomal catalytic site termed the peptidyl transferase center (PTC), which catalyzes the formation of peptide bonds, thereby polymerizing the amino acids delivered by tRNAs into a polypeptide chain. The nascent polypeptides leave the ribosome through a tunnel in the LSU and interact with protein factors that function in enzymatic processing, targeting, and the membrane insertion of nascent chains at the exit of the ribosomal tunnel. The protein is Large ribosomal subunit protein uL18 (RPL5) of Eimeria tenella (Coccidian parasite).